Reading from the N-terminus, the 397-residue chain is Mannan endo-1,4-beta-mannosidase 1 (397 aa).

A signal peptide spans 1–23 (MSYARRSCICGLFLLFLALVCEA). The substrate site is built by Trp83 and Asn198. Glu199 (proton donor) is an active-site residue. Residue Tyr276 coordinates substrate. The Nucleophile role is filled by Glu316. Residue Trp354 participates in substrate binding.

It belongs to the glycosyl hydrolase 5 (cellulase A) family.

It is found in the secreted. The catalysed reaction is Random hydrolysis of (1-&gt;4)-beta-D-mannosidic linkages in mannans, galactomannans and glucomannans.. This Solanum lycopersicum (Tomato) protein is Mannan endo-1,4-beta-mannosidase 1 (MAN1).